The following is a 225-amino-acid chain: Urease accessory protein UreF (225 aa).

It belongs to the UreF family. In terms of assembly, ureD, UreF and UreG form a complex that acts as a GTP-hydrolysis-dependent molecular chaperone, activating the urease apoprotein by helping to assemble the nickel containing metallocenter of UreC. The UreE protein probably delivers the nickel.

It is found in the cytoplasm. Required for maturation of urease via the functional incorporation of the urease nickel metallocenter. The sequence is that of Urease accessory protein UreF from Thermosynechococcus vestitus (strain NIES-2133 / IAM M-273 / BP-1).